Consider the following 326-residue polypeptide: tRNA-modifying protein YgfZ (326 aa).

Residues Trp-27 and Trp-189 each coordinate folate.

The protein belongs to the tRNA-modifying YgfZ family.

It localises to the cytoplasm. Folate-binding protein involved in regulating the level of ATP-DnaA and in the modification of some tRNAs. It is probably a key factor in regulatory networks that act via tRNA modification, such as initiation of chromosomal replication. In Shigella boydii serotype 4 (strain Sb227), this protein is tRNA-modifying protein YgfZ.